A 408-amino-acid polypeptide reads, in one-letter code: Acetate kinase (408 aa).

N7 contributes to the Mg(2+) binding site. Residue K14 coordinates ATP. R91 serves as a coordination point for substrate. Catalysis depends on D148, which acts as the Proton donor/acceptor. ATP contacts are provided by residues 208–212 (HLGNG) and 283–285 (DLR). E388 serves as a coordination point for Mg(2+).

The protein belongs to the acetokinase family. In terms of assembly, homodimer. The cofactor is Mg(2+). Mn(2+) serves as cofactor.

It localises to the cytoplasm. It carries out the reaction acetate + ATP = acetyl phosphate + ADP. The protein operates within metabolic intermediate biosynthesis; acetyl-CoA biosynthesis; acetyl-CoA from acetate: step 1/2. Functionally, catalyzes the formation of acetyl phosphate from acetate and ATP. Can also catalyze the reverse reaction. In Borrelia hermsii (strain HS1 / DAH), this protein is Acetate kinase.